Consider the following 412-residue polypeptide: Phosphoglycerate kinase (412 aa).

Residues 26–28, Arg-42, 65–68, Arg-133, and Arg-166 each bind substrate; these read DFN and HLGR. ATP contacts are provided by residues Lys-217, Gly-308, Glu-339, and 368-371; that span reads GGDS.

It belongs to the phosphoglycerate kinase family. In terms of assembly, monomer.

The protein resides in the cytoplasm. The enzyme catalyses (2R)-3-phosphoglycerate + ATP = (2R)-3-phospho-glyceroyl phosphate + ADP. Its pathway is carbohydrate degradation; glycolysis; pyruvate from D-glyceraldehyde 3-phosphate: step 2/5. The protein is Phosphoglycerate kinase of Synechococcus sp. (strain JA-3-3Ab) (Cyanobacteria bacterium Yellowstone A-Prime).